The sequence spans 81 residues: Short neurotoxin B (81 aa).

The N-terminal stretch at 1–21 (MKTLLLTLVVVTIVCLDLGYT) is a signal peptide. 4 disulfides stabilise this stretch: Cys24–Cys43, Cys38–Cys60, Cys62–Cys73, and Cys74–Cys79.

The protein belongs to the three-finger toxin family. Short-chain subfamily. Type I alpha-neurotoxin sub-subfamily. Expressed by the venom gland.

The protein localises to the secreted. Binds to muscle nicotinic acetylcholine receptor (nAChR) and inhibit acetylcholine from binding to the receptor, thereby impairing neuromuscular transmission. This chain is Short neurotoxin B, found in Aipysurus laevis (Olive sea snake).